Here is a 144-residue protein sequence, read N- to C-terminus: 3-hydroxyacyl-[acyl-carrier-protein] dehydratase FabZ (144 aa).

The active site involves His51.

This sequence belongs to the thioester dehydratase family. FabZ subfamily.

Its subcellular location is the cytoplasm. The catalysed reaction is a (3R)-hydroxyacyl-[ACP] = a (2E)-enoyl-[ACP] + H2O. Its function is as follows. Involved in unsaturated fatty acids biosynthesis. Catalyzes the dehydration of short chain beta-hydroxyacyl-ACPs and long chain saturated and unsaturated beta-hydroxyacyl-ACPs. In Lactococcus lactis subsp. lactis (strain IL1403) (Streptococcus lactis), this protein is 3-hydroxyacyl-[acyl-carrier-protein] dehydratase FabZ (fabZ2).